Consider the following 129-residue polypeptide: Protein Turandot C (129 aa).

A signal peptide spans 1–21 (MNASISLLCFALLLISPFCLG).

This sequence belongs to the Turandot family.

Its subcellular location is the secreted. A humoral factor that may play a role in stress tolerance. In Drosophila sechellia (Fruit fly), this protein is Protein Turandot C.